The primary structure comprises 1210 residues: ATPase family AAA domain-containing protein At1g05910 (1210 aa).

Over residues 1–11 (MHPKRSSQGDG) the composition is skewed to polar residues. Disordered regions lie at residues 1–32 (MHPK…LHGR) and 63–291 (LHKG…RTDD). Acidic residues predominate over residues 97–109 (DYTDSSGAEDEDM). Basic and acidic residues predominate over residues 130-146 (SRKDMDAELAPRREGLR). Residues 167 to 226 (DTSEEKDGQDETENGNELDDADDGENEVEAEDEGNGEDEGDGEDEGEEDGDDDEEGDEEQ) show a composition bias toward acidic residues. The segment covering 227–244 (EGRKRYDLRNRAEVRRMP) has biased composition (basic and acidic residues). Residues 276–286 (GGSRPHKRHRF) are compositionally biased toward basic residues. 422 to 429 (GPPGTGKT) serves as a coordination point for ATP. Residues 856–883 (LNGKPDGPQPLPELPKVPKEPTGPKPAE) form a disordered region. A Bromo domain is found at 897-1000 (RLRMCLRDVC…DVVHGMLSQM (104 aa)). Residues 1057-1070 (DRDYEGLKKPKKTT) show a composition bias toward basic and acidic residues. Positions 1057-1151 (DRDYEGLKKP…EISSRTESVK (95 aa)) are disordered. A compositionally biased stretch (polar residues) spans 1080 to 1090 (DKSQNQDSGQE). Composition is skewed to basic and acidic residues over residues 1108–1123 (DGDR…KEAS) and 1138–1151 (KSDK…ESVK).

The protein belongs to the AAA ATPase family.

In Arabidopsis thaliana (Mouse-ear cress), this protein is ATPase family AAA domain-containing protein At1g05910.